The following is a 279-amino-acid chain: Arabinooligosaccharides transport system permease protein AraQ (279 aa).

The next 6 helical transmembrane spans lie at 8–28 (ILSW…VFPL), 79–99 (VWIS…VGYA), 110–130 (FFFL…MLPL), 140–160 (VNTY…VFFF), 184–204 (GIFF…MAIL), and 245–265 (ILLA…IFFQ). The region spanning 75 to 264 (FGNSVWISIV…VPIVILFIFF (190 aa)) is the ABC transmembrane type-1 domain.

This sequence belongs to the binding-protein-dependent transport system permease family. MalFG subfamily. As to quaternary structure, the complex is composed of two ATP-binding proteins (MsmX), two transmembrane proteins (AraP and AraQ) and a solute-binding protein (AraN).

It is found in the cell membrane. Part of the ABC transporter complex AraNPQ involved in the uptake of arabinooligosaccharides. Responsible for the translocation of the substrate across the membrane. This is Arabinooligosaccharides transport system permease protein AraQ (araQ) from Halalkalibacterium halodurans (strain ATCC BAA-125 / DSM 18197 / FERM 7344 / JCM 9153 / C-125) (Bacillus halodurans).